The chain runs to 144 residues: Maximins 3/H11 type 2 (144 aa).

Positions 1-18 (MHFKYIVAVSFLIASAYA) are cleaved as a signal peptide. Propeptides lie at residues 19–43 (RSVQ…REIR) and 73–122 (RTAE…KKEK). Position 143 is an isoleucine amide (I143).

Belongs to the bombinin family. Expressed by the skin glands.

It is found in the secreted. Maximin-3 shows antibacterial activity against both Gram-positive and Gram-negative bacteria. It also shows antimicrobial activity against the fungus C.albicans, but not against A.flavus nor P.uticale. It has little hemolytic activity. It possess a significant cytotoxicity against tumor cell lines. It possess a significant anti-HIV activity. It shows high spermicidal activity. Functionally, maximin-H11 shows antimicrobial activity against bacteria and against the fungus C.albicans. Shows strong hemolytic activity. This Bombina maxima (Giant fire-bellied toad) protein is Maximins 3/H11 type 2.